The sequence spans 345 residues: MSEEEFYLFKNISSVGPWDGPQYHIAPVWAFYLQAAFMGTVFLIGFPLNAMVLVATLRYKKLRQPLNYILVNVSFGGFLLCIFSVFPVFVASCNGYFVFGRHVCALEGFLGTVAGLVTGWSLAFLAFERYIVICKPFGNFRFSSKHALTVVLATWTIGIGVSIPPFFGWSRFIPEGLQCSCGPDWYTVGTKYRSESYTWFLFIFCFIVPLSLICFSYTQLLRALKAVAAQQQESATTQKAEREVSRMVVVMVGSFCVCYVPYAAFAMYMVNNRNHGLDLRLVTIPSFFSKSACIYNPIIYCFMNKQFQACIMKMVCGKAMTDESDTCSSQKTEVSTVSSTQVGPN.

The Extracellular segment spans residues Met1–Ala30. An N-linked (GlcNAc...) asparagine glycan is attached at Asn11. The helical transmembrane segment at Phe31–Ala55 threads the bilayer. Residues Thr56–Asn67 are Cytoplasmic-facing. A helical membrane pass occupies residues Tyr68–Cys93. At Asn94–Glu107 the chain is on the extracellular side. Cys104 and Cys181 are joined by a disulfide. Residues Gly108–Phe127 traverse the membrane as a helical segment. The Cytoplasmic segment spans residues Glu128 to His146. Residues Ala147–Ser170 traverse the membrane as a helical segment. Residues Arg171–Ser196 lie on the Extracellular side of the membrane. Residues Tyr197–Leu224 traverse the membrane as a helical segment. The Cytoplasmic portion of the chain corresponds to Lys225–Arg246. Residues Met247–Val270 form a helical membrane-spanning segment. Residues Asn271–Asp278 are Extracellular-facing. Residues Leu279–Met303 form a helical membrane-spanning segment. An N6-(retinylidene)lysine modification is found at Lys290. The Cytoplasmic segment spans residues Asn304–Asn345.

This sequence belongs to the G-protein coupled receptor 1 family. Opsin subfamily. Post-translationally, phosphorylated on some or all of the serine and threonine residues present in the C-terminal region. In terms of tissue distribution, the three color pigments are found in the cone photoreceptor cells. Expressed throughout the epidermis and dermis, primarily in the stratum granulosum in the facial and abdominal skin (at protein level). Expressed in dermal fibroblasts (at protein level). Expressed in melanocytes (at protein level).

The protein localises to the cell membrane. It localises to the photoreceptor inner segment. The protein resides in the cell projection. It is found in the cilium. Its subcellular location is the photoreceptor outer segment. The protein localises to the cytoplasm. It localises to the perinuclear region. Functionally, visual pigments are the light-absorbing molecules that mediate vision. They consist of an apoprotein, opsin, covalently linked to cis-retinal. Required for the maintenance of cone outer segment organization in the ventral retina, but not essential for the maintenance of functioning cone photoreceptors. Involved in ensuring correct abundance and localization of retinal membrane proteins. May increase spectral sensitivity in dim light. The polypeptide is Short-wave-sensitive opsin 1 (OPN1SW) (Homo sapiens (Human)).